The following is a 143-amino-acid chain: Myocilin opposite strand protein (143 aa).

The disordered stretch occupies residues 65-111 (MATRDETITKKSGEGEEMLPSMGMDHESPSKAHLMVPPAPPPSPADA). Basic and acidic residues predominate over residues 66-78 (ATRDETITKKSGE).

The chain is Myocilin opposite strand protein from Mus musculus (Mouse).